We begin with the raw amino-acid sequence, 215 residues long: 3-isopropylmalate dehydratase small subunit (215 aa).

This sequence belongs to the LeuD family. LeuD type 1 subfamily. Heterodimer of LeuC and LeuD.

It carries out the reaction (2R,3S)-3-isopropylmalate = (2S)-2-isopropylmalate. The protein operates within amino-acid biosynthesis; L-leucine biosynthesis; L-leucine from 3-methyl-2-oxobutanoate: step 2/4. Functionally, catalyzes the isomerization between 2-isopropylmalate and 3-isopropylmalate, via the formation of 2-isopropylmaleate. The chain is 3-isopropylmalate dehydratase small subunit (leuD) from Azotobacter vinelandii.